A 261-amino-acid chain; its full sequence is tRNA U34 carboxymethyltransferase (261 aa).

Carboxy-S-adenosyl-L-methionine is bound by residues K25, W39, K44, G63, 114–115 (VE), Y135, and R250.

This sequence belongs to the class I-like SAM-binding methyltransferase superfamily. CmoB family. As to quaternary structure, homotetramer.

It carries out the reaction carboxy-S-adenosyl-L-methionine + 5-hydroxyuridine(34) in tRNA = 5-carboxymethoxyuridine(34) in tRNA + S-adenosyl-L-homocysteine + H(+). Its function is as follows. Catalyzes carboxymethyl transfer from carboxy-S-adenosyl-L-methionine (Cx-SAM) to 5-hydroxyuridine (ho5U) to form 5-carboxymethoxyuridine (cmo5U) at position 34 in tRNAs. The chain is tRNA U34 carboxymethyltransferase from Helicobacter pylori (strain P12).